A 313-amino-acid polypeptide reads, in one-letter code: Caffeic acid 3-O-methyltransferase (313 aa).

Position 112-118 (112-118) interacts with substrate; the sequence is IDQDRVF. The segment at 144-162 is substrate binding; that stretch reads AFDYPGTDPRFNKIFNRAM. 5 residues coordinate S-adenosyl-L-methionine: G190, D213, D233, M234, and K247. Residue H251 is the Proton acceptor of the active site.

This sequence belongs to the class I-like SAM-binding methyltransferase superfamily. Cation-independent O-methyltransferase family. COMT subfamily. In terms of assembly, homodimer.

The enzyme catalyses (E)-caffeate + S-adenosyl-L-methionine = (E)-ferulate + S-adenosyl-L-homocysteine + H(+). The protein operates within aromatic compound metabolism; phenylpropanoid biosynthesis. Functionally, catalyzes the conversion of caffeic acid to ferulic acid and of 5-hydroxyferulic acid to sinapic acid. The resulting products may subsequently be converted to the corresponding alcohols that are incorporated into lignins. The chain is Caffeic acid 3-O-methyltransferase (COMT1) from Eucalyptus globulus (Tasmanian blue gum).